Consider the following 106-residue polypeptide: V-type proton ATPase subunit G2 (106 aa).

The residue at position 1 (Met-1) is an N-acetylmethionine. The tract at residues 31–67 (LKQAKEEAETEVAEHKTSTEQGFQRKLEATSGDSGAN) is disordered. Over residues 33-58 (QAKEEAETEVAEHKTSTEQGFQRKLE) the composition is skewed to basic and acidic residues.

The protein belongs to the V-ATPase G subunit family. As to quaternary structure, V-ATPase is a heteromultimeric enzyme composed of a peripheral catalytic V1 complex (components A to H) attached to an integral membrane V0 proton pore complex (components: a, c, c'', d and e).

The protein localises to the vacuole membrane. Its function is as follows. Catalytic subunit of the peripheral V1 complex of vacuolar ATPase (V-ATPase). V-ATPase is responsible for acidifying a variety of intracellular compartments in eukaryotic cells. The protein is V-type proton ATPase subunit G2 (VHA-G2) of Arabidopsis thaliana (Mouse-ear cress).